The following is a 393-amino-acid chain: Pyridinium-3,5-bisthiocarboxylic acid mononucleotide nickel insertion protein (393 aa).

This sequence belongs to the LarC family.

It carries out the reaction Ni(II)-pyridinium-3,5-bisthiocarboxylate mononucleotide = pyridinium-3,5-bisthiocarboxylate mononucleotide + Ni(2+). In terms of biological role, involved in the biosynthesis of a nickel-pincer cofactor ((SCS)Ni(II) pincer complex). Binds Ni(2+), and functions in nickel delivery to pyridinium-3,5-bisthiocarboxylic acid mononucleotide (P2TMN), to form the mature cofactor. Is thus probably required for the activation of nickel-pincer cofactor-dependent enzymes. This is Pyridinium-3,5-bisthiocarboxylic acid mononucleotide nickel insertion protein from Nocardioides sp. (strain ATCC BAA-499 / JS614).